We begin with the raw amino-acid sequence, 216 residues long: Ras-like protein rasW (216 aa).

16-23 (GDGGVGKT) contributes to the GTP binding site. The Effector region motif lies at 38-46 (YDPTIEDSY). GTP-binding positions include 63–67 (DTAGQ) and 122–125 (NKID). The interval 171–193 (KRKEDPQSHKPSKDSDSKKPLVN) is disordered. The span at 172–189 (RKEDPQSHKPSKDSDSKK) shows a compositional bias: basic and acidic residues. The residue at position 213 (cysteine 213) is a Cysteine methyl ester. Cysteine 213 is lipidated: S-geranylgeranyl cysteine. A propeptide spans 214 to 216 (KMM) (removed in mature form).

It belongs to the small GTPase superfamily. Ras family.

The protein localises to the cell membrane. It carries out the reaction GTP + H2O = GDP + phosphate + H(+). In terms of biological role, ras proteins bind GDP/GTP and possess intrinsic GTPase activity. The polypeptide is Ras-like protein rasW (rasW) (Dictyostelium discoideum (Social amoeba)).